A 329-amino-acid polypeptide reads, in one-letter code: MNPVDYLRISLIDRCNFRCQYCMPEGVKLDYILRSELLTDDELLTLIKAVFIPLGFTKFRLTGGEPLLRPGVVQLVRDIAALPQTEDLSMTTNGFLLSRMAKELYQAGLKRINISLDSLNQETFDKIIGNFGASKWQQTWEGIQTAYEVGFNPLKLNVVIIPGINEGEIEDLAALTIDRNWHVRFIEFMPIGNRELFSDRAWVPSEEIRQTIRQKWGLIESTIKGNGPADVFQIPGGKGTLGFISQMSECFCDRCNRMRLSADGWLRPCLLNETGQIDLKTALRQGIKTTELREQVREILAIKPNINYQERESGTQTGTYQRTMSQIGG.

Residues 1-229 (MNPVDYLRIS…ESTIKGNGPA (229 aa)) form the Radical SAM core domain. Arginine 8 is a GTP binding site. Positions 15 and 19 each coordinate [4Fe-4S] cluster. Residue tyrosine 21 participates in S-adenosyl-L-methionine binding. Cysteine 22 provides a ligand contact to [4Fe-4S] cluster. Arginine 60 contacts GTP. Residue glycine 64 coordinates S-adenosyl-L-methionine. Threonine 91 contributes to the GTP binding site. S-adenosyl-L-methionine is bound at residue serine 115. Position 155 (lysine 155) interacts with GTP. Methionine 189 is an S-adenosyl-L-methionine binding site. The [4Fe-4S] cluster site is built by cysteine 252 and cysteine 255. 257-259 (RMR) provides a ligand contact to GTP. Cysteine 269 is a [4Fe-4S] cluster binding site.

It belongs to the radical SAM superfamily. MoaA family. As to quaternary structure, monomer and homodimer. The cofactor is [4Fe-4S] cluster.

The enzyme catalyses GTP + AH2 + S-adenosyl-L-methionine = (8S)-3',8-cyclo-7,8-dihydroguanosine 5'-triphosphate + 5'-deoxyadenosine + L-methionine + A + H(+). Its pathway is cofactor biosynthesis; molybdopterin biosynthesis. Its function is as follows. Catalyzes the cyclization of GTP to (8S)-3',8-cyclo-7,8-dihydroguanosine 5'-triphosphate. The polypeptide is GTP 3',8-cyclase (Rippkaea orientalis (strain PCC 8801 / RF-1) (Cyanothece sp. (strain PCC 8801))).